We begin with the raw amino-acid sequence, 462 residues long: Putative E3 ubiquitin-protein ligase XBAT35 (462 aa).

ANK repeat units lie at residues 6–35 (SKGE…DLEW), 39–69 (EGKT…NVNA), and 75–104 (HAGT…NPLV). 2 disordered regions span residues 277 to 341 (HPPV…GKAS) and 356 to 402 (SSPS…EGER). Over residues 304–317 (SLHTTMSDPSNLNH) the composition is skewed to polar residues. A compositionally biased stretch (low complexity) spans 319–341 (SIGQASSSSGPSSSTAPPSGKAS). The RING-type zinc-finger motif lies at 411 to 450 (CAICLDAPSEAVCVPCGHVAGCMSCLKEIKSKNWGCPVCR).

It carries out the reaction S-ubiquitinyl-[E2 ubiquitin-conjugating enzyme]-L-cysteine + [acceptor protein]-L-lysine = [E2 ubiquitin-conjugating enzyme]-L-cysteine + N(6)-ubiquitinyl-[acceptor protein]-L-lysine.. It functions in the pathway protein modification; protein ubiquitination. Functionally, no E3 ubiquitin-protein ligase activity observed when associated with the E2 enzyme UBC8 in vitro. The chain is Putative E3 ubiquitin-protein ligase XBAT35 (XBAT35) from Arabidopsis thaliana (Mouse-ear cress).